The primary structure comprises 56 residues: LAPVNVDCSDHPKPACLQEQKPLCGSDNKTYDNKCSFCNAVVDSNGTLTLSHFGKC.

Residues 6-56 (VDCSDHPKPACLQEQKPLCGSDNKTYDNKCSFCNAVVDSNGTLTLSHFGKC) enclose the Kazal-like domain. 3 disulfide bridges follow: Cys-8-Cys-38, Cys-16-Cys-35, and Cys-24-Cys-56. Asn-45 carries an N-linked (GlcNAc...) asparagine glycan.

The protein resides in the secreted. This chain is Ovomucoid, found in Pipile pipile (Trinidad piping guan).